The chain runs to 177 residues: Putative adenylate kinase (177 aa).

ATP is bound by residues glycine 10, glycine 12, lysine 13, threonine 14, and threonine 15. The NMP stretch occupies residues aspartate 30–isoleucine 53. Residues lysine 103–glutamate 113 form an LID region. Arginine 104 serves as a coordination point for ATP.

Belongs to the adenylate kinase family. AK6 subfamily. In terms of assembly, interacts with uS11. Not a structural component of 40S pre-ribosomes, but transiently interacts with them by binding to uS11.

The enzyme catalyses AMP + ATP = 2 ADP. It carries out the reaction ATP + H2O = ADP + phosphate + H(+). Its function is as follows. Broad-specificity nucleoside monophosphate (NMP) kinase that catalyzes the reversible transfer of the terminal phosphate group between nucleoside triphosphates and monophosphates. Also has ATPase activity. Involved in the late maturation steps of the 30S ribosomal particles, specifically 16S rRNA maturation. While NMP activity is not required for ribosome maturation, ATPase activity is. Associates transiently with small ribosomal subunit protein uS11. ATP hydrolysis breaks the interaction with uS11. May temporarily remove uS11 from the ribosome to enable a conformational change of the ribosomal RNA that is needed for the final maturation step of the small ribosomal subunit. This is Putative adenylate kinase from Methanocaldococcus jannaschii (strain ATCC 43067 / DSM 2661 / JAL-1 / JCM 10045 / NBRC 100440) (Methanococcus jannaschii).